Here is a 359-residue protein sequence, read N- to C-terminus: sn-1 acyl-lipid omega-3 desaturase (ferredoxin) (359 aa).

A compositionally biased stretch (polar residues) spans Met1–Glu15. Positions Met1–Thr20 are disordered. 2 helical membrane passes run Leu47–Leu67 and Trp70–Val90. Residues His92–His96 carry the Histidine box-1 motif. A Histidine box-2 motif is present at residues His128–His132. The next 2 helical transmembrane spans lie at Val207–Trp227 and Leu228–Phe248. A Histidine box-3 motif is present at residues His294–Leu298.

It belongs to the fatty acid desaturase type 2 family. It depends on Fe(2+) as a cofactor.

It is found in the membrane. It catalyses the reaction a 1-[(9Z,12Z)-octadecdienoyl]-2-acyl-glycerolipid + 2 reduced [2Fe-2S]-[ferredoxin] + O2 + 2 H(+) = a 1-[(9Z,12Z,15Z)-octadectrienoyl]-2-acyl-glycerolipid + 2 oxidized [2Fe-2S]-[ferredoxin] + 2 H2O. The enzyme catalyses a 1-[(6Z,9Z,12Z)-octadectrienoyl]-2-acyl-glycerolipid + 2 reduced [2Fe-2S]-[ferredoxin] + O2 + 2 H(+) = a 1-[(6Z,9Z,12Z,15Z)-octadectetraenoyl]-2-acyl-glycerolipid + 2 oxidized [2Fe-2S]-[ferredoxin] + 2 H2O. The protein operates within lipid metabolism; polyunsaturated fatty acid biosynthesis. In terms of biological role, desaturase involved in fatty acid biosynthesis. Introduces a double bond at carbon 15 of linoleoyl and gamma-linolenoyl groups attached to the sn-1 position of the glycerol moiety of membrane glycerolipids. In Nostoc sp. (strain 36), this protein is sn-1 acyl-lipid omega-3 desaturase (ferredoxin).